The sequence spans 79 residues: Acyl carrier protein (79 aa).

In terms of domain architecture, Carrier spans 2–77; that stretch reads SDIEARVRKI…SAIDYANTHQ (76 aa). Residue Ser37 is modified to O-(pantetheine 4'-phosphoryl)serine.

This sequence belongs to the acyl carrier protein (ACP) family. In terms of processing, 4'-phosphopantetheine is transferred from CoA to a specific serine of apo-ACP by AcpS. This modification is essential for activity because fatty acids are bound in thioester linkage to the sulfhydryl of the prosthetic group.

Its subcellular location is the cytoplasm. It functions in the pathway lipid metabolism; fatty acid biosynthesis. Its function is as follows. Carrier of the growing fatty acid chain in fatty acid biosynthesis. The protein is Acyl carrier protein of Verminephrobacter eiseniae (strain EF01-2).